Consider the following 346-residue polypeptide: tRNA N6-adenosine threonylcarbamoyltransferase (346 aa).

Residues His111 and His115 each coordinate Fe cation. Residues 134 to 138, Asp167, Gly180, and Asn279 each bind substrate; that span reads LVSGG. Asp307 is a binding site for Fe cation.

This sequence belongs to the KAE1 / TsaD family. Fe(2+) is required as a cofactor.

The protein localises to the cytoplasm. It catalyses the reaction L-threonylcarbamoyladenylate + adenosine(37) in tRNA = N(6)-L-threonylcarbamoyladenosine(37) in tRNA + AMP + H(+). Required for the formation of a threonylcarbamoyl group on adenosine at position 37 (t(6)A37) in tRNAs that read codons beginning with adenine. Is involved in the transfer of the threonylcarbamoyl moiety of threonylcarbamoyl-AMP (TC-AMP) to the N6 group of A37, together with TsaE and TsaB. TsaD likely plays a direct catalytic role in this reaction. This is tRNA N6-adenosine threonylcarbamoyltransferase from Burkholderia thailandensis (strain ATCC 700388 / DSM 13276 / CCUG 48851 / CIP 106301 / E264).